The primary structure comprises 114 residues: MTAKGLRRIKIKKRIRKYIFGTAERPRLTVFRSNRQIYSQLIDDSTGNTLVVASSLGITEKVSKKKIAYRTGVLVAQKAKEVGIRSVVFDRNGYLYHGRVKELADAAREEGLKF.

This sequence belongs to the universal ribosomal protein uL18 family. In terms of assembly, part of the 50S ribosomal subunit; part of the 5S rRNA/L5/L18/L25 subcomplex. Contacts the 5S and 23S rRNAs.

In terms of biological role, this is one of the proteins that bind and probably mediate the attachment of the 5S RNA into the large ribosomal subunit, where it forms part of the central protuberance. The chain is Large ribosomal subunit protein uL18 from Azobacteroides pseudotrichonymphae genomovar. CFP2.